The chain runs to 760 residues: MOXD1 homolog 2 (760 aa).

The interval 1–34 (MAHPRKAVATPATLQLGPPAQTAQSPAATLRHSR) is disordered. Over residues 18–34 (PPAQTAQSPAATLRHSR) the composition is skewed to low complexity. The helical transmembrane segment at 47-67 (CFISCHTFNLFLLLLLLASGV) threads the bilayer. 3 N-linked (GlcNAc...) asparagine glycosylation sites follow: asparagine 78, asparagine 198, and asparagine 223. The DOMON domain occupies 117 to 233 (DDFRILWQII…DTMRLLYMYH (117 aa)). 3 disulfides stabilise this stretch: cysteine 339/cysteine 367, cysteine 467/cysteine 581, and cysteine 543/cysteine 565. N-linked (GlcNAc...) asparagine glycosylation is present at asparagine 668. The disordered stretch occupies residues 678–701 (RCKPKRPLAPPTERTAPPPASDLS). The chain crosses the membrane as a helical span at residues 740-760 (FISCLLWLGASSWWLLLMLRT).

It belongs to the copper type II ascorbate-dependent monooxygenase family.

Its subcellular location is the membrane. The sequence is that of MOXD1 homolog 2 (olf413) from Drosophila melanogaster (Fruit fly).